Consider the following 249-residue polypeptide: tRNA pseudouridine synthase A (249 aa).

The active-site Nucleophile is the aspartate 53. Residue tyrosine 111 coordinates substrate.

The protein belongs to the tRNA pseudouridine synthase TruA family. Homodimer.

The enzyme catalyses uridine(38/39/40) in tRNA = pseudouridine(38/39/40) in tRNA. Formation of pseudouridine at positions 38, 39 and 40 in the anticodon stem and loop of transfer RNAs. This Streptococcus suis (strain 98HAH33) protein is tRNA pseudouridine synthase A.